The chain runs to 289 residues: Delta-sarcoglycan (289 aa).

Over 1 to 35 (MPQEQYTHHRSTMPGSVGPQVYKVGIYGWRKRCLY) the chain is Cytoplasmic. A helical; Signal-anchor for type II membrane protein transmembrane segment spans residues 36–56 (FFVLLLMILILVNLAMTIWIL). Residues 57-289 (KVMNFTIDGM…TCQINTSVCL (233 aa)) are Extracellular-facing. N-linked (GlcNAc...) asparagine glycans are attached at residues asparagine 60 and asparagine 108. Intrachain disulfides connect cysteine 263–cysteine 288 and cysteine 265–cysteine 281. Asparagine 284 carries N-linked (GlcNAc...) asparagine glycosylation.

It belongs to the sarcoglycan beta/delta/gamma/zeta family. Interacts with FLNC and DAG1. Cross-link to form 2 major subcomplexes: one consisting of SGCB, SGCD and SGCG and the other consisting of SGCB and SGCD. The association between SGCB and SGCG is particularly strong while SGCA is loosely associated with the other sarcoglycans. Glycosylated. Post-translationally, disulfide bonds are present. Most strongly expressed in skeletal and cardiac muscle. Also detected in smooth muscle. Weak expression in brain and lung.

Its subcellular location is the cell membrane. It localises to the sarcolemma. It is found in the cytoplasm. The protein localises to the cytoskeleton. Its function is as follows. Component of the sarcoglycan complex, a subcomplex of the dystrophin-glycoprotein complex which forms a link between the F-actin cytoskeleton and the extracellular matrix. The sequence is that of Delta-sarcoglycan (SGCD) from Homo sapiens (Human).